The chain runs to 191 residues: Orotate phosphoribosyltransferase (191 aa).

116 to 124 (EDVVTTGGS) provides a ligand contact to 5-phospho-alpha-D-ribose 1-diphosphate. The orotate site is built by threonine 120 and arginine 148.

Belongs to the purine/pyrimidine phosphoribosyltransferase family. PyrE subfamily. As to quaternary structure, homodimer. Mg(2+) is required as a cofactor.

It catalyses the reaction orotidine 5'-phosphate + diphosphate = orotate + 5-phospho-alpha-D-ribose 1-diphosphate. It functions in the pathway pyrimidine metabolism; UMP biosynthesis via de novo pathway; UMP from orotate: step 1/2. Functionally, catalyzes the transfer of a ribosyl phosphate group from 5-phosphoribose 1-diphosphate to orotate, leading to the formation of orotidine monophosphate (OMP). The chain is Orotate phosphoribosyltransferase from Carboxydothermus hydrogenoformans (strain ATCC BAA-161 / DSM 6008 / Z-2901).